We begin with the raw amino-acid sequence, 902 residues long: Cytosolic 10-formyltetrahydrofolate dehydrogenase (902 aa).

The hydrolase domain stretch occupies residues 1 to 310 (MKIAVIGQSL…PASQFFKGSA (310 aa)). At Ser9 the chain carries Phosphoserine. At Lys38 the chain carries N6-succinyllysine. 88 to 90 (QFI) is a binding site for (6R)-10-formyltetrahydrofolate. The active-site Proton donor is His106. (6R)-10-formyltetrahydrofolate is bound at residue Asp142. The region spanning 318-395 (EEELATAEAV…DFIQLLVRKL (78 aa)) is the Carrier domain. Position 354 is an O-(pantetheine 4'-phosphoryl)serine (Ser354). The interval 417-902 (TLQMPYQLFI…LRIKTVTFEY (486 aa)) is aldehyde dehydrogenase domain. NADP(+)-binding positions include 571 to 573 (IPW) and 597 to 600 (KPAQ). Ser629 and Ser631 each carry phosphoserine. Residues 630-635 (GSLVGQ) and 650-651 (GS) contribute to the NADP(+) site. Lys660 carries the N6-succinyllysine modification. Glu673 acts as the Proton acceptor in catalysis. An NADP(+)-binding site is contributed by 673–674 (EL). The active-site Proton donor is the Cys707. Residue Lys757 participates in NADP(+) binding. Lys767 is subject to N6-succinyllysine. 804-806 (ESF) is a binding site for NADP(+). At Ser825 the chain carries Phosphoserine. Lys882 bears the N6-acetyllysine mark.

It in the N-terminal section; belongs to the GART family. In the C-terminal section; belongs to the aldehyde dehydrogenase family. ALDH1L subfamily. As to quaternary structure, homotetramer. Post-translationally, phosphopantetheinylation at Ser-354 by AASDHPPT is required for the formyltetrahydrofolate dehydrogenase activity. As to expression, highly expressed in liver (at protein level). Also expressed in pancreas, brain and lung (at protein level).

The protein localises to the cytoplasm. The protein resides in the cytosol. It carries out the reaction (6R)-10-formyltetrahydrofolate + NADP(+) + H2O = (6S)-5,6,7,8-tetrahydrofolate + CO2 + NADPH + H(+). In terms of biological role, cytosolic 10-formyltetrahydrofolate dehydrogenase that catalyzes the NADP(+)-dependent conversion of 10-formyltetrahydrofolate to tetrahydrofolate and carbon dioxide. May also have an NADP(+)-dependent aldehyde dehydrogenase activity towards formaldehyde, acetaldehyde, propionaldehyde, and benzaldehyde. This is Cytosolic 10-formyltetrahydrofolate dehydrogenase from Mus musculus (Mouse).